We begin with the raw amino-acid sequence, 789 residues long: Disintegrin and metalloproteinase domain-containing protein 7 (789 aa).

An N-terminal signal peptide occupies residues 1–25; the sequence is MFPTGIFLMSVLISQMQGRGIVGVE. A propeptide spanning residues 26–176 is cleaved from the precursor; the sequence is GQELVHPKKL…NYSCEGLNFT (151 aa). N-linked (GlcNAc...) asparagine glycosylation is found at asparagine 84, asparagine 167, and asparagine 174. Residues 177 to 668 lie on the Extracellular side of the membrane; that stretch reads KKSTLIDAKI…WGEALNLTSV (492 aa). Positions 199–393 constitute a Peptidase M12B domain; it reads KFIELFVVAD…QKPACILNNP (195 aa). Cystine bridges form between cysteine 310-cysteine 388, cysteine 350-cysteine 372, cysteine 352-cysteine 357, and cysteine 459-cysteine 479. Positions 401 to 487 constitute a Disintegrin domain; the sequence is YPFCGNKKVD…ECPKDESQAN (87 aa). Residues asparagine 583, asparagine 628, and asparagine 664 are each glycosylated (N-linked (GlcNAc...) asparagine). The helical transmembrane segment at 669–689 threads the bilayer; that stretch reads SIMVVVLVMVIIGVGLVILLI. Residues 690 to 789 are Cytoplasmic-facing; it reads RYQKCIKMKQ…DSQSDCTRLG (100 aa). The segment covering 762–771 has biased composition (basic and acidic residues); the sequence is DPRGIADPKQ. The disordered stretch occupies residues 762 to 789; sequence DPRGIADPKQNDNMNLNLDSQSDCTRLG. Polar residues predominate over residues 772–789; sequence NDNMNLNLDSQSDCTRLG.

In terms of assembly, interacts with ITM2B in sperm; the interaction increases following capacitation. Interacts with HSPA5 and CANX. In terms of tissue distribution, expressed specifically in the caput region of the epididymis (at protein level).

It localises to the membrane. Functionally, required for normal male fertility via maintenance of epithelial cell morphology in the caput epididymis and subsequently correct epididymis lumen structure required for sperm development. Plays a role in sperm motility, flagella morphology and tyrosine phosphorylation during sperm capacitance. Plays a role in normal expression levels of HSPA5, ITM2B and ADAM2 in sperm both prior to and post-capacitation. This is a non catalytic metalloprotease-like protein. This Rattus norvegicus (Rat) protein is Disintegrin and metalloproteinase domain-containing protein 7.